The chain runs to 382 residues: S-adenosylmethionine decarboxylase proenzyme (382 aa).

A substrate-binding site is contributed by Phe32. Catalysis depends on residues Glu33 and Glu36. Substrate is bound at residue Leu87. The Schiff-base intermediate with substrate; via pyruvic acid role is filled by Ser90. Residue Ser90 is modified to Pyruvic acid (Ser); by autocatalysis. Cys104 acts as the Proton donor; for catalytic activity in catalysis. Phe248 is a binding site for substrate. Residues Ser254 and His267 each act as proton acceptor; for processing activity in the active site. Glu271 provides a ligand contact to substrate.

The protein belongs to the eukaryotic AdoMetDC family. In terms of assembly, heterotetramer of two alpha and two beta chains. Pyruvate serves as cofactor. Post-translationally, is synthesized initially as an inactive proenzyme. Formation of the active enzyme involves a self-maturation process in which the active site pyruvoyl group is generated from an internal serine residue via an autocatalytic post-translational modification. Two non-identical subunits are generated from the proenzyme in this reaction, and the pyruvate is formed at the N-terminus of the alpha chain, which is derived from the carboxyl end of the proenzyme. The post-translation cleavage follows an unusual pathway, termed non-hydrolytic serinolysis, in which the side chain hydroxyl group of the serine supplies its oxygen atom to form the C-terminus of the beta chain, while the remainder of the serine residue undergoes an oxidative deamination to produce ammonia and the pyruvoyl group blocking the N-terminus of the alpha chain.

The enzyme catalyses S-adenosyl-L-methionine + H(+) = S-adenosyl 3-(methylsulfanyl)propylamine + CO2. The protein operates within amine and polyamine biosynthesis; S-adenosylmethioninamine biosynthesis; S-adenosylmethioninamine from S-adenosyl-L-methionine: step 1/1. This chain is S-adenosylmethionine decarboxylase proenzyme, found in Leishmania donovani.